We begin with the raw amino-acid sequence, 573 residues long: Leucine aminopeptidase, chloroplastic (573 aa).

The transit peptide at 1 to 53 (MATLRVSSLLASSPSSLHCNPSVFTKCQSSPRWAFSFSVTPLCSRRSKRIVHC) directs the protein to the chloroplast. Positions 342 and 347 each coordinate Mn(2+). Lys-354 is an active-site residue. 3 residues coordinate Mn(2+): Asp-367, Asp-427, and Glu-429. Arg-431 is an active-site residue.

It belongs to the peptidase M17 family. In terms of assembly, homohexamer (dimer of homotrimers). The cofactor is Mn(2+). In tubers and floral buds of untreated plants. After abscisic acid (ABA) treatment or mechanical wounding is mostly accumulated in leaves, to a lesser extent in stems, but not in roots.

The protein localises to the plastid. It is found in the chloroplast. It catalyses the reaction Release of an N-terminal amino acid, Xaa-|-Yaa-, in which Xaa is preferably Leu, but may be other amino acids including Pro although not Arg or Lys, and Yaa may be Pro. Amino acid amides and methyl esters are also readily hydrolyzed, but rates on arylamides are exceedingly low.. The catalysed reaction is Release of N-terminal proline from a peptide.. In terms of biological role, presumably involved in the processing and regular turnover of intracellular proteins. The polypeptide is Leucine aminopeptidase, chloroplastic (LAP) (Solanum tuberosum (Potato)).